The chain runs to 379 residues: Cytochrome b (379 aa).

4 consecutive transmembrane segments (helical) span residues phenylalanine 33–methionine 53, tryptophan 77–isoleucine 98, tryptophan 113–leucine 133, and phenylalanine 178–phenylalanine 198. The heme b site is built by histidine 83 and histidine 97. Residues histidine 182 and histidine 196 each contribute to the heme b site. Residue histidine 201 participates in a ubiquinone binding. 4 consecutive transmembrane segments (helical) span residues isoleucine 226–serine 246, leucine 288–histidine 308, phenylalanine 320–glycine 340, and tyrosine 347–arginine 367.

It belongs to the cytochrome b family. The cytochrome bc1 complex contains 11 subunits: 3 respiratory subunits (MT-CYB, CYC1 and UQCRFS1), 2 core proteins (UQCRC1 and UQCRC2) and 6 low-molecular weight proteins (UQCRH/QCR6, UQCRB/QCR7, UQCRQ/QCR8, UQCR10/QCR9, UQCR11/QCR10 and a cleavage product of UQCRFS1). This cytochrome bc1 complex then forms a dimer. It depends on heme b as a cofactor.

The protein resides in the mitochondrion inner membrane. In terms of biological role, component of the ubiquinol-cytochrome c reductase complex (complex III or cytochrome b-c1 complex) that is part of the mitochondrial respiratory chain. The b-c1 complex mediates electron transfer from ubiquinol to cytochrome c. Contributes to the generation of a proton gradient across the mitochondrial membrane that is then used for ATP synthesis. In Dolichotis patagonum (Patagonian mara), this protein is Cytochrome b (MT-CYB).